The sequence spans 253 residues: Imidazole glycerol phosphate synthase subunit HisF (253 aa).

Active-site residues include aspartate 11 and aspartate 130.

This sequence belongs to the HisA/HisF family. As to quaternary structure, heterodimer of HisH and HisF.

The protein resides in the cytoplasm. It carries out the reaction 5-[(5-phospho-1-deoxy-D-ribulos-1-ylimino)methylamino]-1-(5-phospho-beta-D-ribosyl)imidazole-4-carboxamide + L-glutamine = D-erythro-1-(imidazol-4-yl)glycerol 3-phosphate + 5-amino-1-(5-phospho-beta-D-ribosyl)imidazole-4-carboxamide + L-glutamate + H(+). The protein operates within amino-acid biosynthesis; L-histidine biosynthesis; L-histidine from 5-phospho-alpha-D-ribose 1-diphosphate: step 5/9. In terms of biological role, IGPS catalyzes the conversion of PRFAR and glutamine to IGP, AICAR and glutamate. The HisF subunit catalyzes the cyclization activity that produces IGP and AICAR from PRFAR using the ammonia provided by the HisH subunit. The protein is Imidazole glycerol phosphate synthase subunit HisF of Dehalococcoides mccartyi (strain ATCC BAA-2100 / JCM 16839 / KCTC 5957 / BAV1).